Here is a 110-residue protein sequence, read N- to C-terminus: Large ribosomal subunit protein uL22 (110 aa).

This sequence belongs to the universal ribosomal protein uL22 family. As to quaternary structure, part of the 50S ribosomal subunit.

Its function is as follows. This protein binds specifically to 23S rRNA; its binding is stimulated by other ribosomal proteins, e.g. L4, L17, and L20. It is important during the early stages of 50S assembly. It makes multiple contacts with different domains of the 23S rRNA in the assembled 50S subunit and ribosome. The globular domain of the protein is located near the polypeptide exit tunnel on the outside of the subunit, while an extended beta-hairpin is found that lines the wall of the exit tunnel in the center of the 70S ribosome. This chain is Large ribosomal subunit protein uL22, found in Vibrio cholerae serotype O1 (strain ATCC 39541 / Classical Ogawa 395 / O395).